We begin with the raw amino-acid sequence, 114 residues long: Protein S40-2 (114 aa).

The interval 23 to 50 (RYTKLYNSRNDEKKGTRRHETAEKTSPV) is disordered. Basic and acidic residues predominate over residues 31 to 45 (RNDEKKGTRRHETAE).

The protein belongs to the senescence regulator S40 family.

It is found in the cytoplasm. This is Protein S40-2 from Arabidopsis thaliana (Mouse-ear cress).